Here is a 407-residue protein sequence, read N- to C-terminus: Carbamoyl phosphate synthase small chain (407 aa).

Positions 1–205 (MTETTPKTAP…LQDGYGEQDA (205 aa)) are CPSase. Residues serine 60, glycine 257, and glycine 259 each contribute to the L-glutamine site. Residues 209 to 397 (HVVALDFGVK…INLIRERKGQ (189 aa)) enclose the Glutamine amidotransferase type-1 domain. The active-site Nucleophile is the cysteine 286. Positions 287, 290, 328, 330, and 331 each coordinate L-glutamine. Catalysis depends on residues histidine 370 and glutamate 372.

This sequence belongs to the CarA family. As to quaternary structure, composed of two chains; the small (or glutamine) chain promotes the hydrolysis of glutamine to ammonia, which is used by the large (or ammonia) chain to synthesize carbamoyl phosphate. Tetramer of heterodimers (alpha,beta)4.

The enzyme catalyses hydrogencarbonate + L-glutamine + 2 ATP + H2O = carbamoyl phosphate + L-glutamate + 2 ADP + phosphate + 2 H(+). The catalysed reaction is L-glutamine + H2O = L-glutamate + NH4(+). Its pathway is amino-acid biosynthesis; L-arginine biosynthesis; carbamoyl phosphate from bicarbonate: step 1/1. The protein operates within pyrimidine metabolism; UMP biosynthesis via de novo pathway; (S)-dihydroorotate from bicarbonate: step 1/3. Small subunit of the glutamine-dependent carbamoyl phosphate synthetase (CPSase). CPSase catalyzes the formation of carbamoyl phosphate from the ammonia moiety of glutamine, carbonate, and phosphate donated by ATP, constituting the first step of 2 biosynthetic pathways, one leading to arginine and/or urea and the other to pyrimidine nucleotides. The small subunit (glutamine amidotransferase) binds and cleaves glutamine to supply the large subunit with the substrate ammonia. The sequence is that of Carbamoyl phosphate synthase small chain from Brucella suis (strain ATCC 23445 / NCTC 10510).